The following is a 164-amino-acid chain: 2S seed storage protein 3 (164 aa).

The signal sequence occupies residues 1-21 (MANKLFLVCATLALCFLLTNA). Propeptides lie at residues 22–37 (SIYRTVVEFEEDDASN) and 73–81 (GPSLDDEFD).

This sequence belongs to the 2S seed storage albumins family. The mature protein consists of a small and a large chain linked by disulfide bonds. Interacts with AHK2.

Its function is as follows. This is a 2S seed storage protein. The chain is 2S seed storage protein 3 (AT2S3) from Arabidopsis thaliana (Mouse-ear cress).